A 133-amino-acid chain; its full sequence is DNA-directed RNA polymerases I, II, and III subunit rpabc2 (133 aa).

Acidic residues predominate over residues methionine 1–threonine 32. Positions methionine 1–proline 55 are disordered.

Belongs to the archaeal Rpo6/eukaryotic RPB6 RNA polymerase subunit family. Component of the RNA polymerase I (Pol I), RNA polymerase II (Pol II) and RNA polymerase III (Pol III) complexes consisting of at least 13, 12 and 17 subunits, respectively.

The protein localises to the nucleus. In terms of biological role, DNA-dependent RNA polymerases catalyze the transcription of DNA into RNA using the four ribonucleoside triphosphates as substrates. Common component of RNA polymerases I, II and III which synthesize ribosomal RNA precursors, mRNA precursors and many functional non-coding RNAs, and small RNAs, such as 5S rRNA and tRNAs, respectively. Pol II is the central component of the basal RNA polymerase II transcription machinery. Pols are composed of mobile elements that move relative to each other. In Pol II, RPB6 is part of the clamp element and together with parts of RPB1 and RPB2 forms a pocket to which the RPB4-RPB7 subcomplex binds. The chain is DNA-directed RNA polymerases I, II, and III subunit rpabc2 (polr2f) from Dictyostelium discoideum (Social amoeba).